The primary structure comprises 198 residues: Sorcin (198 aa).

EF-hand domains are found at residues 29-64 (GQTQ…SGIA), 70-103 (FNLE…AVLN), 100-135 (AVLN…MGFR), and 134-169 (FRLS…LRAL). Residues aspartate 83, aspartate 85, serine 87, threonine 89, glutamate 94, aspartate 113, aspartate 115, serine 117, threonine 119, and glutamate 124 each coordinate Ca(2+).

Homodimer. Interacts with GCA, RYR2 and ANXA7. As to expression, detected in cardiac myocytes.

It is found in the cytoplasm. The protein localises to the sarcoplasmic reticulum membrane. Its function is as follows. Calcium-binding protein that modulates excitation-contraction coupling in the heart. Contributes to calcium homeostasis in the heart sarcoplasmic reticulum. Modulates the activity of RYR2 calcium channels. This is Sorcin (SRI) from Homo sapiens (Human).